We begin with the raw amino-acid sequence, 248 residues long: MSSSTRVGLKEQLHPLIRDLATGIEATWQRWLNLEPYAAMPADLGYIEGKLEGERLQIENRCYQSREFRKLHLELARVGNNLDILHCVLFPRTTFDLPMFGADLVGGRGQISAAIVDLSPTTIARELSNDYIAGLTALPNPTFQGLRELPTWGDIFSSFCLFIRPGSPEEEAAFLDRALGFLQVHCQQAAAATALTDPEAIATVLEQQRYYCEQQRRNDKTRRVLEKAFGDDWADRYMTTMLFDLPSD.

This sequence belongs to the HY2 family.

It carries out the reaction (2R,3Z)-phycocyanobilin + 4 oxidized [2Fe-2S]-[ferredoxin] = biliverdin IXalpha + 4 reduced [2Fe-2S]-[ferredoxin] + 4 H(+). Catalyzes the four-electron reduction of biliverdin IX-alpha (2-electron reduction at both the A and D rings); the reaction proceeds via an isolatable 2-electron intermediate, 181,182-dihydrobiliverdin. The polypeptide is Phycocyanobilin:ferredoxin oxidoreductase (Synechococcus sp. (strain ATCC 27144 / PCC 6301 / SAUG 1402/1) (Anacystis nidulans)).